The sequence spans 437 residues: MQVSVENTSALERRMTIAVPAERVENEVNKRLQQTAKRAKIAGFRPGKVPMTVIRQRFEADARQEAFGDLVQASFYEAIVEQKLNPAGAPAVEPKSFEKGKDLEFVAIFEVFPEFTVAGLESIKVERLSAEVADSDLDNMLEVLRKQNTRFEAVERAAQNDDQVNIDFVGKVDGEAFAGGSAKGTLLVLGSGRMIPGFEEGLVGAKAGEERVVNVTFPEDYQNLDLAGKAAEFTITVNSVSAPVLPELNEEFFAQFGIKESTLEGFRAEVRKNMERELRQAIKTKVKNQVMDGLLAANPIEVPKALLENEVNRLRVQAVQQFGGNIKPEQLPVELFEEQAKRRVVLGLIVAEVVKQFELKPDDAKVREMIEEMASAYQEPEQVIAWYYKNDQQLNEVRSVVLEEQVVDTVLQKATVTDKSVSYEEAVKPAEAPAAAE.

The 86-residue stretch at 161–246 (DDQVNIDFVG…VNSVSAPVLP (86 aa)) folds into the PPIase FKBP-type domain.

It belongs to the FKBP-type PPIase family. Tig subfamily.

It is found in the cytoplasm. The catalysed reaction is [protein]-peptidylproline (omega=180) = [protein]-peptidylproline (omega=0). In terms of biological role, involved in protein export. Acts as a chaperone by maintaining the newly synthesized protein in an open conformation. Functions as a peptidyl-prolyl cis-trans isomerase. This chain is Trigger factor, found in Pseudomonas putida (strain ATCC 47054 / DSM 6125 / CFBP 8728 / NCIMB 11950 / KT2440).